A 321-amino-acid chain; its full sequence is Gibberellin 2-beta-dioxygenase 4 (321 aa).

The Fe2OG dioxygenase domain maps to 156-269 (DSDSVLRVNH…RLSTAYFAGP (114 aa)). Positions 193, 195, and 250 each coordinate Fe cation. Arg-260 is an active-site residue.

The protein belongs to the iron/ascorbate-dependent oxidoreductase family. GA2OX subfamily. Fe(2+) is required as a cofactor. As to expression, expressed at the base of the shoot apical meristem and developing leaf primordia.

The catalysed reaction is gibberellin A1 + 2-oxoglutarate + O2 = gibberellin A8 + succinate + CO2. Its pathway is plant hormone biosynthesis; gibberellin biosynthesis. Its function is as follows. Catalyzes the 2-beta-hydroxylation of several biologically active gibberellins, leading to the homeostatic regulation of their endogenous level. Catabolism of gibberellins (GAs) plays a central role in plant development. Converts GA9/GA20 to GA51/GA29 and GA4/GA1 to GA34/GA8. The chain is Gibberellin 2-beta-dioxygenase 4 (GA2OX4) from Arabidopsis thaliana (Mouse-ear cress).